The following is a 792-amino-acid chain: Phenylalanine--tRNA ligase beta subunit (792 aa).

Residues 39–147 (GESLGQVVVA…DDAPVGQALA (109 aa)) enclose the tRNA-binding domain. The 76-residue stretch at 400-475 (PQPARIRLRR…RIHGYDRVPT (76 aa)) folds into the B5 domain. Residues D453, D459, E462, and E463 each coordinate Mg(2+). Positions 698 to 791 (SRFPSVRRDL…IEREHRARIR (94 aa)) constitute an FDX-ACB domain.

It belongs to the phenylalanyl-tRNA synthetase beta subunit family. Type 1 subfamily. As to quaternary structure, tetramer of two alpha and two beta subunits. It depends on Mg(2+) as a cofactor.

The protein resides in the cytoplasm. It catalyses the reaction tRNA(Phe) + L-phenylalanine + ATP = L-phenylalanyl-tRNA(Phe) + AMP + diphosphate + H(+). The polypeptide is Phenylalanine--tRNA ligase beta subunit (Xanthomonas euvesicatoria pv. vesicatoria (strain 85-10) (Xanthomonas campestris pv. vesicatoria)).